The chain runs to 135 residues: BolA-like protein 1 (135 aa).

At Ser-81 the chain carries Phosphoserine. A disordered region spans residues 114 to 135 (WKENPQLDTSPACLGGSKKSRN).

This sequence belongs to the BolA/IbaG family. As to quaternary structure, interacts with GLRX5.

It is found in the mitochondrion. Acts as a mitochondrial iron-sulfur (Fe-S) cluster assembly factor that facilitates (Fe-S) cluster insertion into a subset of mitochondrial proteins. Probably acts together with the monothiol glutaredoxin GLRX5. May protect cells against oxidative stress. This chain is BolA-like protein 1 (BOLA1), found in Bos taurus (Bovine).